A 150-amino-acid polypeptide reads, in one-letter code: UPF0178 protein Shewmr4_1560 (150 aa).

The protein belongs to the UPF0178 family.

In Shewanella sp. (strain MR-4), this protein is UPF0178 protein Shewmr4_1560.